Here is a 416-residue protein sequence, read N- to C-terminus: Phosphatidylinositol 5-phosphate 4-kinase type-2 beta (416 aa).

At Ser2 the chain carries N-acetylserine. Thr8 is modified (phosphothreonine). Ser19 is subject to Phosphoserine. The region spanning 38 to 415 (ASEPILSVLM…RFNEFMSNIL (378 aa)) is the PIPK domain. Residues 64–70 (VMLMPDD) are required for interaction with PIP5K1A. Lys94 and Lys150 each carry N6-acetyllysine. ATP-binding positions include 202 to 204 (RNV) and Lys214. Residues 203 to 204 (NV) and Lys214 each bind GTP. Thr322 carries the post-translational modification Phosphothreonine. Ser326 carries the post-translational modification Phosphoserine. Asp369 is a binding site for GTP.

Homodimer. Binds TNFRSF1A. Interacts with PIP4K2A; the interaction suppresses ubiquitination by the SPOP/CUL3 complex. Post-translationally, ubiquitinated by the SPOP/CUL3 complex. Ubiquitination is stimulated by PtdIns5P levels. Phosphorylated on serine residues. As to expression, highly expressed in brain, heart, pancreas, skeletal muscle and kidney. Detected at lower levels in placenta, lung and liver.

It is found in the endoplasmic reticulum membrane. It localises to the cell membrane. Its subcellular location is the nucleus. The protein resides in the cytoplasm. The catalysed reaction is a 1,2-diacyl-sn-glycero-3-phospho-(1D-myo-inositol-5-phosphate) + ATP = a 1,2-diacyl-sn-glycero-3-phospho-(1D-myo-inositol-4,5-bisphosphate) + ADP + H(+). It carries out the reaction 1,2-dihexadecanoyl-sn-glycero-3-phospho-(1D-myo-inositol-5-phosphate) + ATP = 1,2-dihexadecanoyl-sn-glycero-3-phospho-(1D-myo-inositol-4,5-bisphosphate) + ADP + H(+). It catalyses the reaction 1,2-dihexadecanoyl-sn-glycero-3-phospho-(1D-myo-inositol-5-phosphate) + GTP = 1,2-dihexadecanoyl-sn-glycero-3-phospho-(1D-myo-inositol-4,5-bisphosphate) + GDP + H(+). Participates in the biosynthesis of phosphatidylinositol 4,5-bisphosphate. Preferentially utilizes GTP, rather than ATP, for PI(5)P phosphorylation and its activity reflects changes in direct proportion to the physiological GTP concentration. Its GTP-sensing activity is critical for metabolic adaptation. PIP4Ks negatively regulate insulin signaling through a catalytic-independent mechanism. They interact with PIP5Ks and suppress PIP5K-mediated PtdIns(4,5)P2 synthesis and insulin-dependent conversion to PtdIns(3,4,5)P3. The sequence is that of Phosphatidylinositol 5-phosphate 4-kinase type-2 beta from Homo sapiens (Human).